Consider the following 103-residue polypeptide: Small ribosomal subunit protein uS10 (103 aa).

This sequence belongs to the universal ribosomal protein uS10 family. Part of the 30S ribosomal subunit.

In terms of biological role, involved in the binding of tRNA to the ribosomes. In Pseudoalteromonas translucida (strain TAC 125), this protein is Small ribosomal subunit protein uS10.